A 593-amino-acid polypeptide reads, in one-letter code: Zinc metalloproteinase-disintegrin-like kaouthiagin-like (593 aa).

An N-terminal signal peptide occupies residues 1 to 20; the sequence is MIQALLVIICLAVFPHQGSS. The propeptide occupies 21 to 196; that stretch reads IILESGNVND…KTSQFTNTPE (176 aa). The Peptidase M12B domain maps to 205-400; the sequence is KYIEFYVIVD…DRPQCILNKP (196 aa). The Ca(2+) site is built by Glu-208 and Asp-292. Cystine bridges form between Cys-316-Cys-395, Cys-356-Cys-379, and Cys-358-Cys-363. N-linked (GlcNAc...) asparagine glycosylation is present at Asn-319. The Zn(2+) site is built by His-341, His-345, and His-351. Residues Cys-395, Asn-398, Ile-410, Asn-413, Phe-415, Glu-417, Glu-420, and Asp-423 each coordinate Ca(2+). One can recognise a Disintegrin domain in the interval 408–477; it reads PPICGNYFVE…ECPTDSLQRN (70 aa). 12 disulfide bridges follow: Cys-411-Cys-440, Cys-422-Cys-435, Cys-424-Cys-430, Cys-434-Cys-462, Cys-449-Cys-469, Cys-456-Cys-488, Cys-481-Cys-493, Cys-500-Cys-550, Cys-515-Cys-558, Cys-528-Cys-538, Cys-545-Cys-581, and Cys-575-Cys-586. Positions 455–457 match the D/ECD-tripeptide motif; that stretch reads DCD. Residues Asp-457, Leu-458, Glu-460, Asp-472, and Ser-473 each coordinate Ca(2+). A glycan (N-linked (GlcNAc...) asparagine) is linked at Asn-490.

This sequence belongs to the venom metalloproteinase (M12B) family. P-III subfamily. P-IIIa sub-subfamily. Monomer. It depends on Zn(2+) as a cofactor. In terms of tissue distribution, expressed by the venom gland.

It localises to the secreted. Snake venom zinc metalloproteinase that cleaves the membrane-bound precursor of TNF-alpha (TNF) into its mature soluble form showing the same digestion pattern than ADAM17. This chain is Zinc metalloproteinase-disintegrin-like kaouthiagin-like, found in Naja atra (Chinese cobra).